Consider the following 963-residue polypeptide: SH3 domain-binding protein 4 (963 aa).

The SH3 1 domain occupies 55–114 (GNAKEVIAIKDYCPTNFTTLKFSKGDHLYVLDTSGGEWWYAHNTTEMGYIPSSYVQPLNY). A phosphoserine mark is found at Ser131, Ser246, Ser251, Ser279, and Ser296. Residues 317 to 454 (TNIVCKLDSS…LEPCMYVAVV (138 aa)) enclose the ZU5 domain. Ser637 is subject to Phosphoserine. In terms of domain architecture, SH3 2 spans 654–724 (SSLKFGKLLK…HTKNVLVVGR (71 aa)).

Homodimer or homooligomer. Interacts with DNM2, EPS15, clathrin, the adapter protein complex 2/AP-2 and TFRC. Interacts with the Rag GTPases RRAGA, RRAGB, RRAGC and RRAGD; the interaction is most probably direct, preferentially occurs with their inactive GDP-bound form and is negatively regulated by amino acids. In terms of assembly, (Microbial infection) Interacts with molluscum contagiosum virus protein MC159L; this interaction is important for the suppression of autophagy. In terms of processing, phosphorylated upon EGF stimulation. Phosphorylation prevents interaction with DNM2. In terms of tissue distribution, expressed in all tissues tested with higher expression in pancreas. Expressed by retinal pigment epithelial cells (at protein level).

It is found in the membrane. Its subcellular location is the clathrin-coated pit. It localises to the cytoplasmic vesicle. The protein localises to the clathrin-coated vesicle. The protein resides in the nucleus. In terms of biological role, may function in transferrin receptor internalization at the plasma membrane through a cargo-specific control of clathrin-mediated endocytosis. Alternatively, may act as a negative regulator of the amino acid-induced TOR signaling by inhibiting the formation of active Rag GTPase complexes. Preferentially binds inactive Rag GTPase complexes and prevents their interaction with the mTORC1 complex inhibiting its relocalization to lysosomes and its activation. Thereby, may indirectly regulate cell growth, proliferation and autophagy. The protein is SH3 domain-binding protein 4 (SH3BP4) of Homo sapiens (Human).